A 365-amino-acid polypeptide reads, in one-letter code: P43 5S RNA-binding protein (365 aa).

C2H2-type zinc fingers lie at residues 15–39 (FRCPAAGCKAVYRKEGKLRDHMAGH), 45–69 (WKCGKKDCGKMFARKRQIQKHMKRH), 75–100 (HSCPTAGCKMTFSTKKSLSRHKLYKH), 106–130 (LKCSVPGCKRSFRKKRALRIHVSEH), 136–160 (SVCDVPGCGWKSTSAAKLAAHHRRH), 163–187 (YRCSYEDCQTVSPTWTALQTHLKKH), 191–213 (LQCAACKKPFKKASALRRHKATH), 220–245 (LPCPRQDCDKIFSTVFNLTHHLRKVH), and 251–275 (HRCPHSNCTRSFAMRESLVRHLVVH).

As to quaternary structure, the 42S RNP particle comprises four subunits each of which contains one molecule of 5S RNA, three molecules of tRNA, two molecules of p50 (EF1-alpha) and one molecule of the 5S RNA binding protein 43.

Functionally, p43 is a 5S RNA binding protein which is a major constituent of oocytes and comprises part of a 42S ribonucleoprotein storage particle. The chain is P43 5S RNA-binding protein from Xenopus borealis (Kenyan clawed frog).